A 130-amino-acid chain; its full sequence is MASVKLASLIVLFATLGMFLTKNVGAASCNGVCSPFEMPPCGTSACRCIPVGLVIGYCRNPSGVFLRTNDEHPNLCESDADCRKKGSGKFCGHYPNPGIEYGWCFASKSEAEDFFSKITQKDLLKSVSTA.

The signal sequence occupies residues 1–26 (MASVKLASLIVLFATLGMFLTKNVGA). 3 cysteine pairs are disulfide-bonded: C29–C46, C33–C48, and C41–C58. Propeptides lie at residues 64–69 (VFLRTN) and 123–130 (LLKSVSTA).

The C-terminal glycine may be removed from PA1b.

In terms of biological role, PA1b binds to basic 7S globulin (BG) and stimulates its phosphorylation activity. Involved in the signal transduction system to regulate the growth and differentiation as a hormone peptide. Toxic to various insects through binding to a high affinity binding site in the insect gut. The polypeptide is Albumin-1 F (Pisum sativum (Garden pea)).